We begin with the raw amino-acid sequence, 119 residues long: Large ribosomal subunit protein bL20 (119 aa).

It belongs to the bacterial ribosomal protein bL20 family.

Binds directly to 23S ribosomal RNA and is necessary for the in vitro assembly process of the 50S ribosomal subunit. It is not involved in the protein synthesizing functions of that subunit. The sequence is that of Large ribosomal subunit protein bL20 from Streptococcus thermophilus (strain ATCC BAA-491 / LMD-9).